The following is a 251-amino-acid chain: Triosephosphate isomerase (251 aa).

Position 12–14 (12–14 (NWK)) interacts with substrate. H99 (electrophile) is an active-site residue. E169 acts as the Proton acceptor in catalysis. Substrate contacts are provided by residues G175, S214, and 235–236 (GG).

It belongs to the triosephosphate isomerase family. As to quaternary structure, homodimer.

It localises to the cytoplasm. The catalysed reaction is D-glyceraldehyde 3-phosphate = dihydroxyacetone phosphate. Its pathway is carbohydrate biosynthesis; gluconeogenesis. It participates in carbohydrate degradation; glycolysis; D-glyceraldehyde 3-phosphate from glycerone phosphate: step 1/1. Functionally, involved in the gluconeogenesis. Catalyzes stereospecifically the conversion of dihydroxyacetone phosphate (DHAP) to D-glyceraldehyde-3-phosphate (G3P). The protein is Triosephosphate isomerase of Bradyrhizobium sp. (strain ORS 278).